Reading from the N-terminus, the 436-residue chain is uncharacterized protein (436 aa).

Positions 1–20 are cleaved as a signal peptide; sequence MKCAVAILLVCLTLQQAAYG. 3 coiled-coil regions span residues 25 to 87, 154 to 207, and 247 to 329; these read EEVK…ALRN, MRKT…NSVE, and ESWG…ASLL. Residues 371–390 show a composition bias toward acidic residues; sequence EEEIAPSTEEDGSEELEADS. The interval 371–419 is disordered; the sequence is EEEIAPSTEEDGSEELEADSYDSKVGGESPISQRTEERQGAEERSRLRR. Over residues 404–415 the composition is skewed to basic and acidic residues; sequence RTEERQGAEERS.

Component of the acid-insoluble organic matrix of the aragonitic skeleton (at protein level).

The protein localises to the secreted. This is an uncharacterized protein from Acropora millepora (Staghorn coral).